We begin with the raw amino-acid sequence, 464 residues long: MLAARHFLGGLVPVRVSVRFSSGTTAPKKTSFGSLKDEDRIFTNLYGRHDWRLKGALRRGDWYKTKEILLKGPDWILGEMKTSGLRGRGGAGFPTGLKWSFMNKPSDGRPKYLVVNADEGEPGTCKDREIMRHDPHKLVEGCLVGGRAMGARAAYIYIRGEFYNEASNLQVAIREAYEAGLIGKNACGSDYDFDVFVVRGAGAYICGEETALIESIEGKQGKPRLKPPFPADVGVFGCPTTVANVETVAVSPTICRRGGTWFAGFGRERNSGTKLFNISGHVNHPCTVEEEMSVPLKELIEKHAGGVTGGWDNLLAVIPGGSSTPLIPKSVCETVLMDFDALVQAQTGLGTAAVIVMDRSTDIVKAIARLIEFYKHESCGQCTPCREGVDWMNKVMARFVKGDARPAEIDSLWEISKQIEGHTICALGDGAAWPVQGLIRHFRPELEDRMQRFAQQHRAWQAAS.

The transit peptide at 1–20 (MLAARHFLGGLVPVRVSVRF) directs the protein to the mitochondrion. Position 81 is an N6-acetyllysine; alternate (K81). The residue at position 81 (K81) is an N6-succinyllysine; alternate. 87-96 (GRGGAGFPTG) is a binding site for NADH. K104 is modified (N6-acetyllysine). 199-247 (RGAGAYICGEETALIESIEGKQGKPRLKPPFPADVGVFGCPTTVANVET) contributes to the FMN binding site. Residue R257 is modified to Omega-N-methylarginine. An N6-acetyllysine modification is found at K375. Residues C379, C382, C385, and C425 each contribute to the [4Fe-4S] cluster site.

Belongs to the complex I 51 kDa subunit family. Core subunit of respiratory chain NADH dehydrogenase (Complex I) which is composed of 45 different subunits. This is a component of the flavoprotein-sulfur (FP) fragment of the enzyme. Interacts with RAB5IF. The cofactor is FMN. Requires [4Fe-4S] cluster as cofactor.

It is found in the mitochondrion inner membrane. It carries out the reaction a ubiquinone + NADH + 5 H(+)(in) = a ubiquinol + NAD(+) + 4 H(+)(out). In terms of biological role, core subunit of the mitochondrial membrane respiratory chain NADH dehydrogenase (Complex I) which catalyzes electron transfer from NADH through the respiratory chain, using ubiquinone as an electron acceptor. Part of the peripheral arm of the enzyme, where the electrons from NADH are accepted by flavin mononucleotide (FMN) and then passed along a chain of iron-sulfur clusters by electron tunnelling to the final acceptor ubiquinone. Contains FMN, which is the initial electron acceptor as well as one iron-sulfur cluster. The protein is NADH dehydrogenase [ubiquinone] flavoprotein 1, mitochondrial of Mus musculus (Mouse).